A 372-amino-acid polypeptide reads, in one-letter code: tRNA-specific 2-thiouridylase MnmA (372 aa).

Residues 11–18 (GMSGGVDS) and M37 contribute to the ATP site. Residues 97–99 (NPD) form an interaction with target base in tRNA region. The active-site Nucleophile is the C102. A disulfide bridge links C102 with C199. ATP is bound at residue G126. The interaction with tRNA stretch occupies residues 149–151 (KDQ). The active-site Cysteine persulfide intermediate is C199. Residues 309-310 (RY) form an interaction with tRNA region.

It belongs to the MnmA/TRMU family.

Its subcellular location is the cytoplasm. It catalyses the reaction S-sulfanyl-L-cysteinyl-[protein] + uridine(34) in tRNA + AH2 + ATP = 2-thiouridine(34) in tRNA + L-cysteinyl-[protein] + A + AMP + diphosphate + H(+). Catalyzes the 2-thiolation of uridine at the wobble position (U34) of tRNA, leading to the formation of s(2)U34. The protein is tRNA-specific 2-thiouridylase MnmA of Staphylococcus aureus (strain MSSA476).